Reading from the N-terminus, the 399-residue chain is Serine palmitoyltransferase (399 aa).

Pyridoxal 5'-phosphate is bound by residues 113–114 (GF), His-213, Thr-241, and Ser-243. Lys-244 carries the N6-(pyridoxal phosphate)lysine modification.

The protein belongs to the class-II pyridoxal-phosphate-dependent aminotransferase family. As to quaternary structure, homodimer. Requires pyridoxal 5'-phosphate as cofactor.

It is found in the cytoplasm. It localises to the cell inner membrane. It carries out the reaction L-serine + hexadecanoyl-CoA + H(+) = 3-oxosphinganine + CO2 + CoA. It functions in the pathway lipid metabolism; sphingolipid metabolism. In terms of biological role, catalyzes the condensation of L-serine with palmitoyl-CoA (hexadecanoyl-CoA) to produce 3-oxosphinganine. Exhibits a broad substrate specificity concerning the chain length and the degree of unsaturation of acyl-CoA. The protein is Serine palmitoyltransferase of Sphingobacterium multivorum.